The chain runs to 224 residues: Phosphoglycolate phosphatase (224 aa).

Asp-8 (nucleophile) is an active-site residue. Asp-8 and Asp-10 together coordinate Mg(2+). Lys-151 is a substrate binding site. Residues Asp-174 and Asp-178 each coordinate Mg(2+).

Belongs to the archaeal SPP-like hydrolase family. Requires Mg(2+) as cofactor.

It carries out the reaction 2-phosphoglycolate + H2O = glycolate + phosphate. Catalyzes the dephosphorylation of 2-phosphoglycolate. The chain is Phosphoglycolate phosphatase from Thermoplasma volcanium (strain ATCC 51530 / DSM 4299 / JCM 9571 / NBRC 15438 / GSS1).